Here is a 951-residue protein sequence, read N- to C-terminus: Bifunctional glutamine synthetase adenylyltransferase/adenylyl-removing enzyme (951 aa).

Residues 1-445 (MSILPLPALP…VFDELIGDDA (445 aa)) are adenylyl removase. The adenylyl transferase stretch occupies residues 454-951 (HSSYSSLWQD…VSWNKWLMGA (498 aa)).

The protein belongs to the GlnE family. Mg(2+) serves as cofactor.

It catalyses the reaction [glutamine synthetase]-O(4)-(5'-adenylyl)-L-tyrosine + phosphate = [glutamine synthetase]-L-tyrosine + ADP. The catalysed reaction is [glutamine synthetase]-L-tyrosine + ATP = [glutamine synthetase]-O(4)-(5'-adenylyl)-L-tyrosine + diphosphate. Its function is as follows. Involved in the regulation of glutamine synthetase GlnA, a key enzyme in the process to assimilate ammonia. When cellular nitrogen levels are high, the C-terminal adenylyl transferase (AT) inactivates GlnA by covalent transfer of an adenylyl group from ATP to specific tyrosine residue of GlnA, thus reducing its activity. Conversely, when nitrogen levels are low, the N-terminal adenylyl removase (AR) activates GlnA by removing the adenylyl group by phosphorolysis, increasing its activity. The regulatory region of GlnE binds the signal transduction protein PII (GlnB) which indicates the nitrogen status of the cell. The chain is Bifunctional glutamine synthetase adenylyltransferase/adenylyl-removing enzyme from Pectobacterium atrosepticum (strain SCRI 1043 / ATCC BAA-672) (Erwinia carotovora subsp. atroseptica).